The primary structure comprises 461 residues: tRNA modification GTPase MnmE (461 aa).

The (6S)-5-formyl-5,6,7,8-tetrahydrofolate site is built by Arg-27, Glu-89, and Arg-128. The TrmE-type G domain maps to 224 to 382; sequence GLATAIVGRP…LEELINKLFF (159 aa). A K(+)-binding site is contributed by Asn-234. GTP is bound by residues 234-239, 253-259, and 278-281; these read NVGKSS, TDVAGTT, and DTAG. Ser-238 is a binding site for Mg(2+). The K(+) site is built by Thr-253, Val-255, and Thr-258. Thr-259 lines the Mg(2+) pocket. A (6S)-5-formyl-5,6,7,8-tetrahydrofolate-binding site is contributed by Lys-461.

Belongs to the TRAFAC class TrmE-Era-EngA-EngB-Septin-like GTPase superfamily. TrmE GTPase family. In terms of assembly, homodimer. Heterotetramer of two MnmE and two MnmG subunits. Requires K(+) as cofactor.

The protein resides in the cytoplasm. Exhibits a very high intrinsic GTPase hydrolysis rate. Involved in the addition of a carboxymethylaminomethyl (cmnm) group at the wobble position (U34) of certain tRNAs, forming tRNA-cmnm(5)s(2)U34. The chain is tRNA modification GTPase MnmE from Lactobacillus helveticus (strain DPC 4571).